A 142-amino-acid polypeptide reads, in one-letter code: Hemoglobin subunit alpha-C (142 aa).

Ala-2 bears the N-acetylalanine mark. The Globin domain occupies 2 to 142 (ALNCDDKAHI…VSGLLTSKYR (141 aa)). His-59 lines the O2 pocket. Residue His-88 coordinates heme b.

Belongs to the globin family. As to quaternary structure, heterotetramer of either two alpha-B chains or two alpha-C chains and two beta chains. The two major hemoglobins, B and C, associate upon deoxygenation to form a trimer of tetramers, BC2, that has a much lower affinity for oxygen than either component alone. In terms of tissue distribution, red blood cells.

In terms of biological role, the alpha-C chain is a component of adult hemoglobin C. This Aquarana catesbeiana (American bullfrog) protein is Hemoglobin subunit alpha-C.